A 295-amino-acid chain; its full sequence is MFHLQGPQLLQMLEKSLRKSLPESLKVYGTVFHMNQGNPFNLKALVDKWPDFKTVVIRPQEQEMADDFDHYTNTYQIYSKDLNNCQESLATSDVINWKQHLQIQSSQSSLNEVVQNLAATKFVKVEHTQCILYVMPETARKLLPSLPETKNLPVGYGAPKAINQEMFKLSSMDPTHAALVNKFWHFGGNERSQRFIERCIRAFPTFCLLGPEGTPASWSLMDQTGEIRMGATLPEYRGHGLISHMLAVHTRALDQLGIPVYNHTDKANKIVQKVSHNLHHIAIPHGWNQWNCEPL.

Lys-43 is subject to N6-acetyllysine. An N6-acetyllysine; alternate modification is found at Lys-48. Residue Lys-48 is modified to N6-succinyllysine; alternate. Residue Lys-80 is modified to N6-acetyllysine. Lys-182 carries the N6-acetyllysine; alternate modification. Position 182 is an N6-succinyllysine; alternate (Lys-182).

The protein belongs to the glycine N-acyltransferase family.

It is found in the mitochondrion. It carries out the reaction phenylacetyl-CoA + glycine = phenylacetylglycine + CoA + H(+). Functionally, mitochondrial acyltransferase which transfers the acyl group to the N-terminus of glycine. Can conjugate a multitude of substrates to form a variety of N-acylglycines. Catalyzes the conjugation of arylacetic acids with glycine but does not have activity towards any alkyl-CoA. This Bos taurus (Bovine) protein is Glycine N-phenylacetyltransferase.